The following is a 1620-amino-acid chain: NAD-specific glutamate dehydrogenase (1620 aa).

The active site involves Lys-851.

Belongs to the Glu/Leu/Phe/Val dehydrogenases family. Homotetramer. Contains disulfide bonds (interchain).

The catalysed reaction is L-glutamate + NAD(+) + H2O = 2-oxoglutarate + NH4(+) + NADH + H(+). Its activity is regulated as follows. Activity subject to allosteric control by arginine and citrate, which function as positive and negative effectors, respectively. Its function is as follows. Involved in arginine catabolism by converting L-glutamate, into 2-oxoglutarate, which is then channeled into the tricarboxylic acid cycle. Can also utilize other amino acids of the glutamate family. In Pseudomonas aeruginosa (strain ATCC 15692 / DSM 22644 / CIP 104116 / JCM 14847 / LMG 12228 / 1C / PRS 101 / PAO1), this protein is NAD-specific glutamate dehydrogenase (gdhB).